A 391-amino-acid chain; its full sequence is Matrix metalloproteinase-23 (391 aa).

The Cytoplasmic portion of the chain corresponds to 1–18; that stretch reads MGCRACLRPEASGAVQGR. The propeptide occupies 1 to 79; it reads MGCRACLRPE…LTMSVTRRRR (79 aa). Residues 19 to 39 traverse the membrane as a helical segment; that stretch reads WLGAALSGLCLLSALALLEWL. Residues 40-391 are Lumenal-facing; sequence GAPTETAWRA…TYSWRVRVRN (352 aa). N-linked (GlcNAc...) asparagine glycosylation is found at Asn93 and Asn149. A Zn(2+)-binding site is contributed by His212. Glu213 is an active-site residue. Residues His216 and His222 each coordinate Zn(2+). N-linked (GlcNAc...) asparagine glycosylation occurs at Asn233. Positions 256-290 constitute a ShKT domain; the sequence is CLDRIFVCASWARKGFCDVRQRLMKRLCPRSCDFC. Intrachain disulfides connect Cys256-Cys290, Cys263-Cys283, and Cys272-Cys287. An Ig-like C2-type domain is found at 298-383; sequence VATTTSPTRT…RRHQRVLSTY (86 aa). N-linked (GlcNAc...) asparagine glycosylation is present at Asn317. Residues Cys322 and Cys371 are joined by a disulfide bond.

The protein belongs to the peptidase M10A family. Zn(2+) serves as cofactor. N-glycosylated. In terms of processing, proteolytic cleavage might yield an active form. Expressed at relatively high level in heart, lung and spleen. Not detected in brain, liver, skeletal muscle, kidney and testis.

It localises to the endoplasmic reticulum membrane. Its subcellular location is the membrane. With respect to regulation, inhibited by TIMP2. Its function is as follows. Protease. May regulate the surface expression of some potassium channels by retaining them in the endoplasmic reticulum. This is Matrix metalloproteinase-23 (Mmp23) from Mus musculus (Mouse).